Reading from the N-terminus, the 566-residue chain is CTP synthase (566 aa).

Residues 1–270 (MTKFVFVTGG…DGLICDKLRL (270 aa)) form an amidoligase domain region. CTP is bound at residue S13. Residue S13 coordinates UTP. Residues 14 to 19 (SLGKGI) and D71 each bind ATP. D71 and E144 together coordinate Mg(2+). Residues 151-153 (DIE), 191-196 (KTKPTQ), and K227 contribute to the CTP site. UTP-binding positions include 191–196 (KTKPTQ) and K227. One can recognise a Glutamine amidotransferase type-1 domain in the interval 295–547 (SIAMVGKYVD…IAATLEQRSA (253 aa)). G356 provides a ligand contact to L-glutamine. C383 serves as the catalytic Nucleophile; for glutamine hydrolysis. L-glutamine contacts are provided by residues 384 to 387 (LGMQ), E407, and R473. Residues H520 and E522 contribute to the active site.

The protein belongs to the CTP synthase family. As to quaternary structure, homotetramer.

It catalyses the reaction UTP + L-glutamine + ATP + H2O = CTP + L-glutamate + ADP + phosphate + 2 H(+). It carries out the reaction L-glutamine + H2O = L-glutamate + NH4(+). The catalysed reaction is UTP + NH4(+) + ATP = CTP + ADP + phosphate + 2 H(+). It participates in pyrimidine metabolism; CTP biosynthesis via de novo pathway; CTP from UDP: step 2/2. Allosterically activated by GTP, when glutamine is the substrate; GTP has no effect on the reaction when ammonia is the substrate. The allosteric effector GTP functions by stabilizing the protein conformation that binds the tetrahedral intermediate(s) formed during glutamine hydrolysis. Inhibited by the product CTP, via allosteric rather than competitive inhibition. Catalyzes the ATP-dependent amination of UTP to CTP with either L-glutamine or ammonia as the source of nitrogen. Regulates intracellular CTP levels through interactions with the four ribonucleotide triphosphates. In Polaromonas naphthalenivorans (strain CJ2), this protein is CTP synthase.